A 301-amino-acid polypeptide reads, in one-letter code: 3-methyl-2-oxobutanoate hydroxymethyltransferase (301 aa).

The span at 1 to 28 shows a compositional bias: low complexity; that stretch reads MATSNSSDSSMSAEVPAPYGNGPANAPA. Residues 1–37 form a disordered region; the sequence is MATSNSSDSSMSAEVPAPYGNGPANAPATPSDTAKKP. Positions 82 and 121 each coordinate Mg(2+). 3-methyl-2-oxobutanoate-binding positions include 82 to 83, aspartate 121, and lysine 151; that span reads DS. Residue glutamate 153 participates in Mg(2+) binding. The active-site Proton acceptor is the glutamate 219.

This sequence belongs to the PanB family. As to quaternary structure, homodecamer; pentamer of dimers. Mg(2+) serves as cofactor.

The protein resides in the cytoplasm. It carries out the reaction 3-methyl-2-oxobutanoate + (6R)-5,10-methylene-5,6,7,8-tetrahydrofolate + H2O = 2-dehydropantoate + (6S)-5,6,7,8-tetrahydrofolate. The protein operates within cofactor biosynthesis; (R)-pantothenate biosynthesis; (R)-pantoate from 3-methyl-2-oxobutanoate: step 1/2. In terms of biological role, catalyzes the reversible reaction in which hydroxymethyl group from 5,10-methylenetetrahydrofolate is transferred onto alpha-ketoisovalerate to form ketopantoate. In Arthrobacter sp. (strain FB24), this protein is 3-methyl-2-oxobutanoate hydroxymethyltransferase.